We begin with the raw amino-acid sequence, 115 residues long: UPF0122 protein NT01CX_2214 (115 aa).

The protein belongs to the UPF0122 family.

Might take part in the signal recognition particle (SRP) pathway. This is inferred from the conservation of its genetic proximity to ftsY/ffh. May be a regulatory protein. The protein is UPF0122 protein NT01CX_2214 of Clostridium novyi (strain NT).